A 165-amino-acid polypeptide reads, in one-letter code: 3-isopropylmalate dehydratase small subunit (165 aa).

This sequence belongs to the LeuD family. LeuD type 2 subfamily. In terms of assembly, heterodimer of LeuC and LeuD.

It catalyses the reaction (2R,3S)-3-isopropylmalate = (2S)-2-isopropylmalate. It functions in the pathway amino-acid biosynthesis; L-leucine biosynthesis; L-leucine from 3-methyl-2-oxobutanoate: step 2/4. Functionally, catalyzes the isomerization between 2-isopropylmalate and 3-isopropylmalate, via the formation of 2-isopropylmaleate. This Helicobacter hepaticus (strain ATCC 51449 / 3B1) protein is 3-isopropylmalate dehydratase small subunit.